The chain runs to 64 residues: Conotoxin VnMLCL-033 (64 aa).

The signal sequence occupies residues 1–19 (MLCLPVFIILLLLASPAAP). A propeptide spanning residues 20–43 (NPLQTRIQSNLIRAGPEDANIKTD) is cleaved from the precursor. Residue Ile-63 is modified to Isoleucine amide.

Belongs to the conotoxin T superfamily. Expressed by the venom duct.

Its subcellular location is the secreted. The protein is Conotoxin VnMLCL-033 of Conus ventricosus (Mediterranean cone).